Reading from the N-terminus, the 129-residue chain is MNIGEASERSGLPSKTIRYYEDIGLIRPERGGNGYRDYAATDVHKLRFLQRSRGLGFSVEECRQLLALYEDKDRASADVRDIAQTKLTEIDRKIRELTELRRTLEHLVHACHGNDRPDCPILEELSDGA.

The region spanning 1-68 (MNIGEASERS…VEECRQLLAL (68 aa)) is the HTH merR-type domain. The segment at residues 4–23 (GEASERSGLPSKTIRYYEDI) is a DNA-binding region (H-T-H motif).

In terms of assembly, homodimer.

It is found in the cytoplasm. Functionally, regulates the transcription of actP. It detects cytoplasmic copper stress and activates transcription in response to increasing copper concentrations. In the absence of copper, it negatively regulates the transcription of actP. In Rhizobium leguminosarum bv. viciae, this protein is HTH-type transcriptional regulator HmrR (hmrR).